A 196-amino-acid polypeptide reads, in one-letter code: Gastrula zinc finger protein XlCGF64.1 (196 aa).

7 consecutive C2H2-type zinc fingers follow at residues Tyr6–His28, Phe34–His56, Tyr62–His84, Phe90–His112, Tyr118–His140, Phe146–His168, and Leu174–His196.

Belongs to the krueppel C2H2-type zinc-finger protein family.

The protein resides in the nucleus. Its function is as follows. May be involved in transcriptional regulation. The chain is Gastrula zinc finger protein XlCGF64.1 from Xenopus laevis (African clawed frog).